The primary structure comprises 183 residues: Myelin-associated oligodendrocyte basic protein (183 aa).

The interval 68–183 (TRTSRRAKSP…GSPVKASRFW (116 aa)) is disordered. Residues 69 to 78 (RTSRRAKSPQ) are compositionally biased toward basic residues. The segment covering 79-96 (RPKQQPAAPPAVVRAPAK) has biased composition (low complexity). 4 repeat units span residues 97–106 (PRSPPRSERQ), 107–116 (PRSPPRSERQ), 117–126 (PRSPPRSERQ), and 127–136 (PRSPPRSERQ). Residues 97–136 (PRSPPRSERQPRSPPRSERQPRSPPRSERQPRSPPRSERQ) form a 4 X 10 AA tandem repeats of P-R-S-P-P-R-S-E-R-Q region. Phosphoserine occurs at positions 99 and 109. The segment covering 101–143 (PRSERQPRSPPRSERQPRSPPRSERQPRSPPRSERQPRPRPEV) has biased composition (basic and acidic residues). Over residues 151–164 (RPPQKSKQQPRSSP) the composition is skewed to low complexity.

It is found in the cytoplasm. Its subcellular location is the perinuclear region. In terms of biological role, may play a role in compacting or stabilizing the myelin sheath, possibly by binding the negatively charged acidic phospholipids of the cytoplasmic membrane. The polypeptide is Myelin-associated oligodendrocyte basic protein (MOBP) (Homo sapiens (Human)).